A 169-amino-acid chain; its full sequence is Disulfide bond formation protein B 1 (169 aa).

The Cytoplasmic segment spans residues 1–14; the sequence is MSEETIRLGRERRY. The chain crosses the membrane as a helical span at residues 15-31; sequence LVLLGIICLALIGGALY. Residues 32–49 lie on the Periplasmic side of the membrane; it reads MQIVLGEAPCPLCILQRY. Cys-41 and Cys-44 form a disulfide bridge. Residues 50 to 64 form a helical membrane-spanning segment; sequence ALLLIALFAFIGAAM. Over 65–71 the chain is Cytoplasmic; the sequence is RTRRSIT. A helical transmembrane segment spans residues 72 to 89; it reads VFEVLVVICAIAGAGVAG. The Periplasmic portion of the chain corresponds to 90–144; the sequence is HHVYTQFYPAVSCGIDVLQPIVDDLPLAKIFPLGFQVDGFCSTPYPPILGLSLAQ. A disulfide bridge connects residues Cys-102 and Cys-130. Residues 145-163 traverse the membrane as a helical segment; that stretch reads WALVAFVLVVILVPLLTSR. Over 164–169 the chain is Cytoplasmic; the sequence is NRKALR.

It belongs to the DsbB family.

It is found in the cell inner membrane. Functionally, required for disulfide bond formation in some periplasmic proteins. Acts by oxidizing the DsbA protein. The chain is Disulfide bond formation protein B 1 from Pseudomonas fluorescens (strain Pf0-1).